We begin with the raw amino-acid sequence, 738 residues long: Transcription activator of gluconeogenesis SMAC_06113 (738 aa).

The interval 1 to 65 (MPDDVGPAEA…KYDPKDPLRP (65 aa)) is disordered. Basic and acidic residues-rich tracts occupy residues 28-39 (ATTKDDDEKMAE) and 51-64 (GDQK…DPLR). The segment at residues 74–102 (CYACQRAHLTCGDERPCQRCIKRGLAEAC) is a DNA-binding region (zn(2)-C6 fungal-type). 4 disordered regions span residues 255–278 (SSGA…GDVG), 328–404 (HAYA…KRQR), 530–579 (GTNS…KEQP), and 636–673 (SVPT…TGAN). 2 stretches are compositionally biased toward polar residues: residues 337–351 (TSLQ…SPQP) and 530–540 (GTNSDTLSVSS). One can recognise a PAS domain in the interval 475–546 (ALFEHEEFMH…SVSSKGGRGG (72 aa)). 2 stretches are compositionally biased toward low complexity: residues 568 to 579 (QQQQSQQQKEQP) and 636 to 655 (SVPT…VNGG).

Belongs to the ERT1/acuK family.

The protein resides in the nucleus. Its function is as follows. Transcription factor which regulates nonfermentable carbon utilization. Activator of gluconeogenetic genes. This chain is Transcription activator of gluconeogenesis SMAC_06113, found in Sordaria macrospora (strain ATCC MYA-333 / DSM 997 / K(L3346) / K-hell).